A 257-amino-acid chain; its full sequence is 5'-nucleotidase SurE (257 aa).

4 residues coordinate a divalent metal cation: D8, D9, S40, and N93.

Belongs to the SurE nucleotidase family. A divalent metal cation serves as cofactor.

It is found in the cytoplasm. It catalyses the reaction a ribonucleoside 5'-phosphate + H2O = a ribonucleoside + phosphate. Nucleotidase that shows phosphatase activity on nucleoside 5'-monophosphates. The polypeptide is 5'-nucleotidase SurE (Phenylobacterium zucineum (strain HLK1)).